A 132-amino-acid chain; its full sequence is uncharacterized protein (132 aa).

The signal sequence occupies residues 1–18; that stretch reads MRKIISMLFIPLFIFAMA.

This is an uncharacterized protein from Aquifex aeolicus (strain VF5).